The sequence spans 278 residues: Sulfur carrier protein FdhD (278 aa).

Cysteine 121 serves as the catalytic Cysteine persulfide intermediate. Mo-bis(molybdopterin guanine dinucleotide) is bound at residue 260-265 (FCKPGR).

It belongs to the FdhD family.

It is found in the cytoplasm. In terms of biological role, required for formate dehydrogenase (FDH) activity. Acts as a sulfur carrier protein that transfers sulfur from IscS to the molybdenum cofactor prior to its insertion into FDH. The protein is Sulfur carrier protein FdhD of Klebsiella pneumoniae subsp. pneumoniae (strain ATCC 700721 / MGH 78578).